Here is a 92-residue protein sequence, read N- to C-terminus: MARSLKKGPFADPHLLKKIEAQVDSEKKSVIKTWSRRSTIFPSFIGFTIAVYDGRKHVPVYVQEDMVGHKLGEFVPTRTFKGHKNDDKKTGK.

It belongs to the universal ribosomal protein uS19 family.

In terms of biological role, protein S19 forms a complex with S13 that binds strongly to the 16S ribosomal RNA. The protein is Small ribosomal subunit protein uS19 of Leuconostoc mesenteroides subsp. mesenteroides (strain ATCC 8293 / DSM 20343 / BCRC 11652 / CCM 1803 / JCM 6124 / NCDO 523 / NBRC 100496 / NCIMB 8023 / NCTC 12954 / NRRL B-1118 / 37Y).